Here is a 425-residue protein sequence, read N- to C-terminus: Glutamate-1-semialdehyde 2,1-aminomutase (425 aa).

Lysine 264 carries the N6-(pyridoxal phosphate)lysine modification.

This sequence belongs to the class-III pyridoxal-phosphate-dependent aminotransferase family. HemL subfamily. As to quaternary structure, homodimer. The cofactor is pyridoxal 5'-phosphate.

The protein localises to the cytoplasm. It catalyses the reaction (S)-4-amino-5-oxopentanoate = 5-aminolevulinate. It participates in porphyrin-containing compound metabolism; protoporphyrin-IX biosynthesis; 5-aminolevulinate from L-glutamyl-tRNA(Glu): step 2/2. This Hydrogenobaculum sp. (strain Y04AAS1) protein is Glutamate-1-semialdehyde 2,1-aminomutase.